We begin with the raw amino-acid sequence, 161 residues long: uncharacterized protein (161 aa).

It belongs to the M.jannaschii MJ0150/MJ0739/MJ0745/MJ1460/MJ1642 family.

This is an uncharacterized protein from Methanocaldococcus jannaschii (strain ATCC 43067 / DSM 2661 / JAL-1 / JCM 10045 / NBRC 100440) (Methanococcus jannaschii).